Here is a 469-residue protein sequence, read N- to C-terminus: Tubulin gamma chain (469 aa).

Residue 142–148 (AGGTGSG) participates in GTP binding.

This sequence belongs to the tubulin family.

It is found in the cytoplasm. It localises to the cytoskeleton. Its subcellular location is the microtubule organizing center. The protein localises to the spindle pole body. Functionally, tubulin is the major constituent of microtubules. The gamma chain is found at microtubule organizing centers (MTOC) such as the spindle poles or the centrosome, suggesting that it is involved in the minus-end nucleation of microtubule assembly. In Microbotryum violaceum (Anther smut fungus), this protein is Tubulin gamma chain (TUB4).